Consider the following 223-residue polypeptide: Phosphoenolpyruvate guanylyltransferase (223 aa).

Residues T140, G156, and S159 each contribute to the phosphoenolpyruvate site.

This sequence belongs to the CofC family.

The catalysed reaction is phosphoenolpyruvate + GTP + H(+) = enolpyruvoyl-2-diphospho-5'-guanosine + diphosphate. It participates in cofactor biosynthesis; coenzyme F420 biosynthesis. Guanylyltransferase that catalyzes the activation of phosphoenolpyruvate (PEP) as enolpyruvoyl-2-diphospho-5'-guanosine, via the condensation of PEP with GTP. It is involved in the biosynthesis of coenzyme F420, a hydride carrier cofactor. This Conexibacter woesei (strain DSM 14684 / CCUG 47730 / CIP 108061 / JCM 11494 / NBRC 100937 / ID131577) protein is Phosphoenolpyruvate guanylyltransferase.